The chain runs to 164 residues: ATP synthase subunit b 1 (164 aa).

Residues 8 to 28 (PETWVAIAFVILMGLFAYLGV) traverse the membrane as a helical segment.

Belongs to the ATPase B chain family. As to quaternary structure, F-type ATPases have 2 components, F(1) - the catalytic core - and F(0) - the membrane proton channel. F(1) has five subunits: alpha(3), beta(3), gamma(1), delta(1), epsilon(1). F(0) has three main subunits: a(1), b(2) and c(10-14). The alpha and beta chains form an alternating ring which encloses part of the gamma chain. F(1) is attached to F(0) by a central stalk formed by the gamma and epsilon chains, while a peripheral stalk is formed by the delta and b chains.

Its subcellular location is the cell inner membrane. In terms of biological role, f(1)F(0) ATP synthase produces ATP from ADP in the presence of a proton or sodium gradient. F-type ATPases consist of two structural domains, F(1) containing the extramembraneous catalytic core and F(0) containing the membrane proton channel, linked together by a central stalk and a peripheral stalk. During catalysis, ATP synthesis in the catalytic domain of F(1) is coupled via a rotary mechanism of the central stalk subunits to proton translocation. Component of the F(0) channel, it forms part of the peripheral stalk, linking F(1) to F(0). The sequence is that of ATP synthase subunit b 1 from Bradyrhizobium sp. (strain ORS 278).